The primary structure comprises 434 residues: [Arg8]-vasotocin receptor (434 aa).

Residues 1 to 27 (MGRIANQTTASNDTDPFGRNEEVAKME) are Extracellular-facing. Residues N6 and N12 are each glycosylated (N-linked (GlcNAc...) asparagine). A helical transmembrane segment spans residues 28-48 (ITVLSVTFFVAVIGNLSVLLA). Over 49 to 67 (MHNTKKKSSRMHLFIKHLS) the chain is Cytoplasmic. A helical transmembrane segment spans residues 68-88 (LADMVVAFFQVLPQLCWEITF). Topologically, residues 89–98 (RFYGPDFLCR) are extracellular. C97 and C176 are joined by a disulfide. A helical transmembrane segment spans residues 99–119 (IVKHLQVLGMFASTYMMVMMT). The Cytoplasmic segment spans residues 120–141 (LDRYIAICHPLKTLQQPTQRAY). A helical transmembrane segment spans residues 142 to 162 (IMIGSTWLCSLLLSTPQYFIF). Topologically, residues 163-191 (SLSEIQNGSYVYDCWGHFIEPWGIRAYIT) are extracellular. The chain crosses the membrane as a helical span at residues 192–212 (WITVGIFLIPVIILMICYGFI). The Cytoplasmic segment spans residues 213–257 (CHSIWKNIKCKTMRGTRNTKDGMIGKVSVSSVTIISRAKLRTVKM). A helical membrane pass occupies residues 258-278 (TLVIVLAYIVCWAPFFIVQMW). At 279 to 295 (SVWDENFSWDDSENAAV) the chain is on the extracellular side. A helical transmembrane segment spans residues 296–316 (TLSALLASLNSCCNPWIYMLF). Over 317–434 (SGHLLYDFLR…KSSQCMSKES (118 aa)) the chain is Cytoplasmic.

Belongs to the G-protein coupled receptor 1 family. Vasopressin/oxytocin receptor subfamily. In terms of tissue distribution, expressed in pituitary, liver, gills, swim bladder and lateral line.

The protein resides in the cell membrane. Its function is as follows. Binds to vasotocin. Produces an induction of membrane chloride currents indicating that it is coupled to the inositol phosphate/calcium pathway. In Catostomus commersonii (White sucker), this protein is [Arg8]-vasotocin receptor.